The primary structure comprises 247 residues: MKFFQEQIAIKETNILLKVDNPKFFKMAKNAVINERLNLENYILRNPIFLTSYSPLEVPDNAPKIVKLMAEAGFNADVGPMAAVAGTFSQLIVENLIENDCKNAISENGGDICLKCEMDTTVGLYAGNSSLSGNLGFKLKKEKMKNGYGICTSSGTVGHSVSFGNADSVTVFSKSAIIADAAATSIGNFAVGNAVDAMNNCLEKAETISKIDGVFVCMGEHAGKIGKIPQLIKTDKKEVLGNVFEMV.

Belongs to the UPF0280 family.

In Methanococcus maripaludis (strain C5 / ATCC BAA-1333), this protein is UPF0280 protein MmarC5_0355.